We begin with the raw amino-acid sequence, 104 residues long: NADH-quinone oxidoreductase subunit K (104 aa).

3 consecutive transmembrane segments (helical) span residues 4 to 24 (VPAS…LFGA), 31 to 51 (VIVL…LVAF), and 67 to 87 (LFTM…LIAL).

It belongs to the complex I subunit 4L family. As to quaternary structure, NDH-1 is composed of 14 different subunits. Subunits NuoA, H, J, K, L, M, N constitute the membrane sector of the complex.

The protein resides in the cell membrane. It carries out the reaction a quinone + NADH + 5 H(+)(in) = a quinol + NAD(+) + 4 H(+)(out). In terms of biological role, NDH-1 shuttles electrons from NADH, via FMN and iron-sulfur (Fe-S) centers, to quinones in the respiratory chain. The immediate electron acceptor for the enzyme in this species is believed to be a menaquinone. Couples the redox reaction to proton translocation (for every two electrons transferred, four hydrogen ions are translocated across the cytoplasmic membrane), and thus conserves the redox energy in a proton gradient. The protein is NADH-quinone oxidoreductase subunit K of Bacillus cereus (strain ATCC 14579 / DSM 31 / CCUG 7414 / JCM 2152 / NBRC 15305 / NCIMB 9373 / NCTC 2599 / NRRL B-3711).